The sequence spans 184 residues: Putative axial regulator YABBY 2 (184 aa).

Residues cysteine 15 to cysteine 42 form a C4-type zinc finger. 2 stretches are compositionally biased toward polar residues: residues leucine 76–glutamate 94 and leucine 171–tyrosine 184. Disordered regions lie at residues leucine 76–valine 115 and leucine 162–tyrosine 184.

Belongs to the YABBY family. Interacts with SPL/NZZ and SPEAR2. Expressed at low levels in abaxial regions of lateral aerial organ primordia leading to cotyledons, leaves, flower meristems, sepals, petals, stamen and carpels, but not in roots.

Its subcellular location is the nucleus. Its function is as follows. Involved in the abaxial cell fate determination during embryogenesis and organogenesis. This Arabidopsis thaliana (Mouse-ear cress) protein is Putative axial regulator YABBY 2 (YAB2).